We begin with the raw amino-acid sequence, 320 residues long: Foldase protein PrsA (320 aa).

An N-terminal signal peptide occupies residues 1-20; that stretch reads MKMINKLIVPVTASALLLGA. A lipid anchor (N-palmitoyl cysteine) is attached at C21. Residue C21 is the site of S-diacylglycerol cysteine attachment. Residues 139-245 form the PpiC domain; sequence EDSKKASHIL…FGYHIIKADK (107 aa). Residues 159-198 form a disordered region; it reads EGLDDKEAKQKAEEIQKEVSKDPSKFGEIAKKESMDTGSA.

Belongs to the PrsA family.

It localises to the cell membrane. The catalysed reaction is [protein]-peptidylproline (omega=180) = [protein]-peptidylproline (omega=0). Plays a major role in protein secretion by helping the post-translocational extracellular folding of several secreted proteins. The polypeptide is Foldase protein PrsA (Staphylococcus aureus (strain MRSA252)).